The primary structure comprises 461 residues: Protein YIG1 (461 aa).

The interval 58–80 is disordered; that stretch reads SNVGEDGGDVGNYSEEDDDGDEE. Over residues 71–80 the composition is skewed to acidic residues; it reads SEEDDDGDEE.

It is found in the cytoplasm. The protein localises to the nucleus. In terms of biological role, involved in the regulation of anaerobiotic glycerol metabolism. The chain is Protein YIG1 (YIG1) from Saccharomyces cerevisiae (strain ATCC 204508 / S288c) (Baker's yeast).